Consider the following 57-residue polypeptide: Ribosome modulation factor 1 (57 aa).

Basic residues predominate over residues Met-1 to Thr-14. Positions Met-1–Arg-24 are disordered.

It belongs to the ribosome modulation factor family.

The protein localises to the cytoplasm. Functionally, during stationary phase, converts 70S ribosomes to an inactive dimeric form (100S ribosomes). The chain is Ribosome modulation factor 1 from Colwellia psychrerythraea (strain 34H / ATCC BAA-681) (Vibrio psychroerythus).